The sequence spans 525 residues: GMP synthase [glutamine-hydrolyzing] (525 aa).

Residues 8 to 207 enclose the Glutamine amidotransferase type-1 domain; it reads KILILDFGSQ…ALDICGCAAN (200 aa). Cys-85 (nucleophile) is an active-site residue. Residues His-181 and Glu-183 contribute to the active site. Positions 208 to 400 constitute a GMPS ATP-PPase domain; that stretch reads WKPSSIIEDA…LGLPYNMLYR (193 aa). 235 to 241 is a binding site for ATP; that stretch reads SGGVDSS.

As to quaternary structure, homodimer.

It catalyses the reaction XMP + L-glutamine + ATP + H2O = GMP + L-glutamate + AMP + diphosphate + 2 H(+). The protein operates within purine metabolism; GMP biosynthesis; GMP from XMP (L-Gln route): step 1/1. Functionally, catalyzes the synthesis of GMP from XMP. The polypeptide is GMP synthase [glutamine-hydrolyzing] (Shewanella baltica (strain OS155 / ATCC BAA-1091)).